Reading from the N-terminus, the 878-residue chain is Alanine--tRNA ligase (878 aa).

Positions 564, 568, 666, and 670 each coordinate Zn(2+).

Belongs to the class-II aminoacyl-tRNA synthetase family. As to quaternary structure, homotetramer. Zn(2+) is required as a cofactor.

Its subcellular location is the cytoplasm. It catalyses the reaction tRNA(Ala) + L-alanine + ATP = L-alanyl-tRNA(Ala) + AMP + diphosphate. Catalyzes the attachment of alanine to tRNA(Ala) in a two-step reaction: alanine is first activated by ATP to form Ala-AMP and then transferred to the acceptor end of tRNA(Ala). Also edits incorrectly charged Ser-tRNA(Ala) and Gly-tRNA(Ala) via its editing domain. This Buchnera aphidicola subsp. Acyrthosiphon pisum (strain APS) (Acyrthosiphon pisum symbiotic bacterium) protein is Alanine--tRNA ligase.